The following is a 654-amino-acid chain: Protein fem-1 homolog A-like (654 aa).

ANK repeat units follow at residues aspartate 2–leucine 31, glycine 40–alanine 70, glutamate 82–arginine 111, threonine 115–valine 145, histidine 149–arginine 178, lysine 182–arginine 211, and tyrosine 214–glutamine 243. Serine 108 bears the Phosphoserine mark. Positions histidine 241 to proline 265 are disordered. The segment covering glycine 253 to serine 263 has biased composition (polar residues). 2 TPR repeats span residues valine 283–glycine 317 and serine 375–asparagine 408. ANK repeat units lie at residues asparagine 519–serine 561 and aspartate 565–alanine 594. Residue serine 608 is modified to Phosphoserine.

The protein belongs to the fem-1 family. As to quaternary structure, component of a CRL2 E3 ubiquitin-protein ligase complex, also named ECS (Elongin BC-CUL2/5-SOCS-box protein) complex, composed of CUL2, Elongin BC (ELOB and ELOC), RBX1 and substrate-specific adapter FEM1A.

The protein resides in the mitochondrion. It is found in the cytoplasm. It participates in protein modification; protein ubiquitination. Functionally, substrate-recognition component of a Cul2-RING (CRL2) E3 ubiquitin-protein ligase complex of the DesCEND (destruction via C-end degrons) pathway, which recognizes a C-degron located at the extreme C terminus of target proteins, leading to their ubiquitination and degradation. The C-degron recognized by the DesCEND pathway is usually a motif of less than ten residues and can be present in full-length proteins, truncated proteins or proteolytically cleaved forms. The CRL2(FEM1A) complex specifically recognizes proteins with an arginine at the C-terminus: recognizes and binds proteins ending with -Lys/Arg-Xaa-Arg and -Lys/Arg-Xaa-Xaa-Arg C-degrons, such as SIL1 or OR51B2, leading to their ubiquitination and degradation. This is Protein fem-1 homolog A-like from Mus musculus (Mouse).